A 339-amino-acid polypeptide reads, in one-letter code: N-acetyl-gamma-glutamyl-phosphate reductase 1 (339 aa).

The active site involves Cys-149.

The protein belongs to the NAGSA dehydrogenase family. Type 1 subfamily.

The protein localises to the cytoplasm. The catalysed reaction is N-acetyl-L-glutamate 5-semialdehyde + phosphate + NADP(+) = N-acetyl-L-glutamyl 5-phosphate + NADPH + H(+). It functions in the pathway amino-acid biosynthesis; L-arginine biosynthesis; N(2)-acetyl-L-ornithine from L-glutamate: step 3/4. Its function is as follows. Catalyzes the NADPH-dependent reduction of N-acetyl-5-glutamyl phosphate to yield N-acetyl-L-glutamate 5-semialdehyde. The protein is N-acetyl-gamma-glutamyl-phosphate reductase 1 of Lactiplantibacillus plantarum (strain ATCC BAA-793 / NCIMB 8826 / WCFS1) (Lactobacillus plantarum).